An 838-amino-acid chain; its full sequence is Lymphoid-specific helicase (838 aa).

Residues 30-115 (MLEEEEQLEA…SLKVKKGKNS (86 aa)) are a coiled coil. A compositionally biased stretch (basic and acidic residues) spans 94–108 (QKKKEKLERKKESLK). A disordered region spans residues 94–135 (QKKKEKLERKKESLKVKKGKNSIDASEEKPVMRKKRGREDES). Ser115 carries the post-translational modification Phosphoserine. A compositionally biased stretch (basic and acidic residues) spans 119 to 134 (SEEKPVMRKKRGREDE). In terms of domain architecture, Helicase ATP-binding spans 235 to 403 (RMLWENGING…WSLLNFLLPD (169 aa)). 248–255 (DEMGLGKT) is an ATP binding site. Positions 354–357 (DEGH) match the DEAH box motif. Residues Ser503 and Ser515 each carry the phosphoserine modification. The 165-residue stretch at 603–767 (ILDRMLPELK…GLNLSKNFLD (165 aa)) folds into the Helicase C-terminal domain.

This sequence belongs to the SNF2/RAD54 helicase family. In terms of tissue distribution, highly expressed in proliferative tissues such as adult thymus and testis, and expressed at lower levels in uterus, small intestine, colon, and peripheral blood mononuclear cells. Also expressed in neoplastic cell lines including those derived from myeloid and lymphoid leukemias.

Its subcellular location is the nucleus. Plays an essential role in normal development and survival. Involved in regulation of the expansion or survival of lymphoid cells. Required for de novo or maintenance DNA methylation. May control silencing of the imprinted CDKN1C gene through DNA methylation. May play a role in formation and organization of heterochromatin, implying a functional role in the regulation of transcription and mitosis. This is Lymphoid-specific helicase from Homo sapiens (Human).